Reading from the N-terminus, the 194-residue chain is Probable calcium-binding protein CML45 (194 aa).

Basic and acidic residues predominate over residues 52–63 (NNKDQQETLTKQ). The segment at 52–81 (NNKDQQETLTKQEDDDDDDDDDDDDDDDDI) is disordered. Residues 64–81 (EDDDDDDDDDDDDDDDDI) show a composition bias toward acidic residues. 3 consecutive EF-hand domains span residues 76–98 (DDDD…LGLF), 122–157 (ASLE…LGFK), and 160–194 (SYLD…TSFY). Residues Asp135, Asn137, Asp139, Glu146, Asp173, Asn175, Asp177, Lys179, and Glu184 each contribute to the Ca(2+) site.

Its function is as follows. Potential calcium sensor. In Arabidopsis thaliana (Mouse-ear cress), this protein is Probable calcium-binding protein CML45.